Consider the following 350-residue polypeptide: Transmembrane protein 185A (350 aa).

The next 7 helical transmembrane spans lie at 16–36 (LIYA…DGII), 41–61 (WAVF…ASVG), 81–101 (FKAM…EVLV), 111–131 (FWLL…AACV), 177–197 (ILMS…VLFL), 211–231 (ITMA…EILL), and 240–260 (AFSC…LMAT). Positions 298-350 (DLHHEDNEETEETPVPEPPKIAPMFRKKARVVITQSPGKYVLPPPKLNIEMPD) are mediates interaction with MAP1B.

Belongs to the TMEM185 family. Interacts with MAP1B.

The protein resides in the cell projection. It localises to the dendrite. Its subcellular location is the membrane. The protein is Transmembrane protein 185A (TMEM185A) of Homo sapiens (Human).